We begin with the raw amino-acid sequence, 171 residues long: Translationally-controlled tumor protein homolog (171 aa).

One can recognise a TCTP domain in the interval 1–171 (MIIYKDIITG…FKDGLEIEKC (171 aa)).

The protein belongs to the TCTP family.

It localises to the cytoplasm. In terms of biological role, involved in calcium binding and microtubule stabilization. This chain is Translationally-controlled tumor protein homolog (tpt1), found in Danio rerio (Zebrafish).